Consider the following 225-residue polypeptide: Uracil-DNA glycosylase (225 aa).

Catalysis depends on aspartate 65, which acts as the Proton acceptor.

The protein belongs to the uracil-DNA glycosylase (UDG) superfamily. UNG family.

Its subcellular location is the cytoplasm. The catalysed reaction is Hydrolyzes single-stranded DNA or mismatched double-stranded DNA and polynucleotides, releasing free uracil.. Excises uracil residues from the DNA which can arise as a result of misincorporation of dUMP residues by DNA polymerase or due to deamination of cytosine. In Clostridium beijerinckii (strain ATCC 51743 / NCIMB 8052) (Clostridium acetobutylicum), this protein is Uracil-DNA glycosylase.